The chain runs to 259 residues: Imidazole glycerol phosphate synthase subunit HisF (259 aa).

Active-site residues include aspartate 11 and aspartate 130.

This sequence belongs to the HisA/HisF family. In terms of assembly, heterodimer of HisH and HisF.

The protein localises to the cytoplasm. It catalyses the reaction 5-[(5-phospho-1-deoxy-D-ribulos-1-ylimino)methylamino]-1-(5-phospho-beta-D-ribosyl)imidazole-4-carboxamide + L-glutamine = D-erythro-1-(imidazol-4-yl)glycerol 3-phosphate + 5-amino-1-(5-phospho-beta-D-ribosyl)imidazole-4-carboxamide + L-glutamate + H(+). It functions in the pathway amino-acid biosynthesis; L-histidine biosynthesis; L-histidine from 5-phospho-alpha-D-ribose 1-diphosphate: step 5/9. Functionally, IGPS catalyzes the conversion of PRFAR and glutamine to IGP, AICAR and glutamate. The HisF subunit catalyzes the cyclization activity that produces IGP and AICAR from PRFAR using the ammonia provided by the HisH subunit. The sequence is that of Imidazole glycerol phosphate synthase subunit HisF from Oleidesulfovibrio alaskensis (strain ATCC BAA-1058 / DSM 17464 / G20) (Desulfovibrio alaskensis).